Consider the following 331-residue polypeptide: Glyceraldehyde-3-phosphate dehydrogenase 3 (331 aa).

NAD(+) contacts are provided by residues 11–12 (RI), Asp-33, and Glu-77. Ser-148 is subject to Phosphoserine. 148 to 150 (SCT) provides a ligand contact to D-glyceraldehyde 3-phosphate. The active-site Nucleophile is the Cys-149. Ser-177 carries the phosphoserine modification. Thr-179 contributes to the D-glyceraldehyde 3-phosphate binding site. At Ser-200 the chain carries Phosphoserine. D-glyceraldehyde 3-phosphate contacts are provided by residues 208–209 (TG) and Arg-231. Asn-313 contributes to the NAD(+) binding site.

This sequence belongs to the glyceraldehyde-3-phosphate dehydrogenase family. As to quaternary structure, homotetramer.

Its subcellular location is the cytoplasm. It catalyses the reaction D-glyceraldehyde 3-phosphate + phosphate + NAD(+) = (2R)-3-phospho-glyceroyl phosphate + NADH + H(+). Its pathway is carbohydrate degradation; glycolysis; pyruvate from D-glyceraldehyde 3-phosphate: step 1/5. The polypeptide is Glyceraldehyde-3-phosphate dehydrogenase 3 (Kluyveromyces marxianus (Yeast)).